The chain runs to 380 residues: Flagellar P-ring protein (380 aa).

The N-terminal stretch at 1–35 (MRFFTQSPFPLRTLTRRLTAFVCVGLLLLPGFTLA) is a signal peptide.

This sequence belongs to the FlgI family. The basal body constitutes a major portion of the flagellar organelle and consists of four rings (L,P,S, and M) mounted on a central rod.

The protein localises to the periplasm. It localises to the bacterial flagellum basal body. Its function is as follows. Assembles around the rod to form the L-ring and probably protects the motor/basal body from shearing forces during rotation. The chain is Flagellar P-ring protein from Gluconobacter oxydans (strain 621H) (Gluconobacter suboxydans).